The chain runs to 124 residues: Galanin peptides (124 aa).

The signal sequence occupies residues 1-19 (MARGSVILLAWLLLVATLS). Residues 20–30 (ATLGLGMPTKE) constitute a propeptide that is removed on maturation. The residue at position 61 (threonine 61) is a Threonine amide. Residues serine 117 and serine 118 each carry the phosphoserine modification.

Belongs to the galanin family.

The protein localises to the secreted. In terms of biological role, endocrine hormone of the central and peripheral nervous systems that binds and activates the G protein-coupled receptors GALR1, GALR2, and GALR3. This small neuropeptide may regulate diverse physiologic functions including contraction of smooth muscle of the gastrointestinal and genitourinary tract, growth hormone and insulin release and adrenal secretion. In Rattus norvegicus (Rat), this protein is Galanin peptides (Gal).